Here is a 122-residue protein sequence, read N- to C-terminus: UPF0145 protein BamMC406_5002 (122 aa).

The protein belongs to the UPF0145 family.

The protein is UPF0145 protein BamMC406_5002 of Burkholderia ambifaria (strain MC40-6).